Consider the following 468-residue polypeptide: Aldehyde dehydrogenase family 3 member B1 (468 aa).

Methionine 1 carries the post-translational modification N-acetylmethionine. 188-193 (GNPQVG) is a binding site for NAD(+). Residues glutamate 210 and cysteine 244 contribute to the active site. Cysteine 463 carries S-palmitoyl cysteine lipidation. Cysteine 465 is modified (cysteine methyl ester). The S-geranylgeranyl cysteine moiety is linked to residue cysteine 465. Residues 466-468 (TLL) constitute a propeptide, removed in mature form.

Belongs to the aldehyde dehydrogenase family. Post-translationally, dually lipidated in the C-terminus; prenylation occurs prior to, and is a prerequisite for palmitoylation. It is also required for activity towards long-chain substrates.

It localises to the cell membrane. It carries out the reaction an aldehyde + NAD(+) + H2O = a carboxylate + NADH + 2 H(+). The enzyme catalyses a long-chain fatty aldehyde + NAD(+) + H2O = a long-chain fatty acid + NADH + 2 H(+). The catalysed reaction is a medium-chain fatty aldehyde + NAD(+) + H2O = a medium-chain fatty acid + NADH + 2 H(+). It catalyses the reaction octanal + NAD(+) + H2O = octanoate + NADH + 2 H(+). It carries out the reaction nonanal + NAD(+) + H2O = nonanoate + NADH + 2 H(+). The enzyme catalyses hexadecanoate + NADH + 2 H(+) = hexadecanal + NAD(+) + H2O. The catalysed reaction is (2E)-octenal + NAD(+) + H2O = (2E)-octenoate + NADH + 2 H(+). It catalyses the reaction (E)-non-2-enal + NAD(+) + H2O = (E)-non-2-enoate + NADH + 2 H(+). It carries out the reaction (E)-4-hydroxynon-2-enal + NAD(+) + H2O = (E)-4-hydroxynon-2-enoate + NADH + 2 H(+). The enzyme catalyses (2E)-hexadecenal + NAD(+) + H2O = (E)-hexadec-2-enoate + NADH + 2 H(+). The catalysed reaction is benzaldehyde + NAD(+) + H2O = benzoate + NADH + 2 H(+). It catalyses the reaction an aldehyde + NADP(+) + H2O = a carboxylate + NADPH + 2 H(+). It carries out the reaction a medium-chain fatty aldehyde + NADP(+) + H2O = a medium-chain fatty acid + NADPH + 2 H(+). The enzyme catalyses hexanal + NADP(+) + H2O = hexanoate + NADPH + 2 H(+). The catalysed reaction is octanal + NADP(+) + H2O = octanoate + NADPH + 2 H(+). It catalyses the reaction nonanal + NADP(+) + H2O = nonanoate + NADPH + 2 H(+). It carries out the reaction (2E)-octenal + NADP(+) + H2O = (2E)-octenoate + NADPH + 2 H(+). The enzyme catalyses (E)-non-2-enal + NADP(+) + H2O = (E)-non-2-enoate + NADPH + 2 H(+). The catalysed reaction is (E)-4-hydroxynon-2-enal + NADP(+) + H2O = (E)-4-hydroxynon-2-enoate + NADPH + 2 H(+). It catalyses the reaction benzaldehyde + NADP(+) + H2O = benzoate + NADPH + 2 H(+). The protein operates within alcohol metabolism; ethanol degradation; acetate from ethanol: step 2/2. Functionally, oxidizes medium and long chain saturated and unsaturated fatty aldehydes generated in the plasma membrane into non-toxic fatty acids. May have a protective role against the cytotoxicity induced by lipid peroxidation. Short-chain fatty aldehydes are not good substrates. Can use both NADP(+) and NAD(+) as electron acceptor in vitro, however in vivo preference will depend on their tissue levels. Low activity towards acetaldehyde and 3,4-dihydroxyphenylacetaldehyde. Able to metabolize aromatic aldehydes such as benzaldehyde to their acid form. This chain is Aldehyde dehydrogenase family 3 member B1 (ALDH3B1), found in Bos taurus (Bovine).